A 955-amino-acid polypeptide reads, in one-letter code: 2-oxoglutarate dehydrogenase E1 component (955 aa).

This sequence belongs to the alpha-ketoglutarate dehydrogenase family. As to quaternary structure, homodimer. Part of the 2-oxoglutarate dehydrogenase (OGDH) complex composed of E1 (2-oxoglutarate dehydrogenase), E2 (dihydrolipoamide succinyltransferase) and E3 (dihydrolipoamide dehydrogenase); the complex contains multiple copies of the three enzymatic components (E1, E2 and E3). Thiamine diphosphate is required as a cofactor.

The enzyme catalyses N(6)-[(R)-lipoyl]-L-lysyl-[protein] + 2-oxoglutarate + H(+) = N(6)-[(R)-S(8)-succinyldihydrolipoyl]-L-lysyl-[protein] + CO2. Functionally, E1 component of the 2-oxoglutarate dehydrogenase (OGDH) complex which catalyzes the decarboxylation of 2-oxoglutarate, the first step in the conversion of 2-oxoglutarate to succinyl-CoA and CO(2). In Bacillus mycoides (strain KBAB4) (Bacillus weihenstephanensis), this protein is 2-oxoglutarate dehydrogenase E1 component.